A 169-amino-acid chain; its full sequence is Co-chaperone protein HscB homolog (169 aa).

A J domain is found at 2-74 (NYFDLFSLPV…CLRAQYLLLL (73 aa)).

The protein belongs to the HscB family. In terms of assembly, interacts with HscA and stimulates its ATPase activity.

Functionally, co-chaperone involved in the maturation of iron-sulfur cluster-containing proteins. Seems to help targeting proteins to be folded toward HscA. The sequence is that of Co-chaperone protein HscB homolog from Psychromonas ingrahamii (strain DSM 17664 / CCUG 51855 / 37).